Reading from the N-terminus, the 438-residue chain is UDP-N-acetylmuramoylalanine--D-glutamate ligase (438 aa).

An ATP-binding site is contributed by 112 to 118 (GSNGKST).

This sequence belongs to the MurCDEF family.

It is found in the cytoplasm. The enzyme catalyses UDP-N-acetyl-alpha-D-muramoyl-L-alanine + D-glutamate + ATP = UDP-N-acetyl-alpha-D-muramoyl-L-alanyl-D-glutamate + ADP + phosphate + H(+). It participates in cell wall biogenesis; peptidoglycan biosynthesis. Its function is as follows. Cell wall formation. Catalyzes the addition of glutamate to the nucleotide precursor UDP-N-acetylmuramoyl-L-alanine (UMA). The polypeptide is UDP-N-acetylmuramoylalanine--D-glutamate ligase (Salmonella typhimurium (strain LT2 / SGSC1412 / ATCC 700720)).